Reading from the N-terminus, the 506-residue chain is ATP synthase subunit alpha, chloroplastic (506 aa).

170–177 (GDRQTGKT) is an ATP binding site.

This sequence belongs to the ATPase alpha/beta chains family. In terms of assembly, F-type ATPases have 2 components, CF(1) - the catalytic core - and CF(0) - the membrane proton channel. CF(1) has five subunits: alpha(3), beta(3), gamma(1), delta(1), epsilon(1). CF(0) has four main subunits: a, b, b' and c.

It localises to the plastid. The protein resides in the chloroplast thylakoid membrane. It catalyses the reaction ATP + H2O + 4 H(+)(in) = ADP + phosphate + 5 H(+)(out). Its function is as follows. Produces ATP from ADP in the presence of a proton gradient across the membrane. The alpha chain is a regulatory subunit. This is ATP synthase subunit alpha, chloroplastic from Chlorokybus atmophyticus (Soil alga).